Here is a 511-residue protein sequence, read N- to C-terminus: Apolipoprotein N-acyltransferase (511 aa).

6 helical membrane passes run 7 to 25 (PGWP…TPLA), 58 to 78 (GWWY…VSIH), 90 to 110 (FLML…AWLW), 125 to 145 (LAFA…LTGF), 163 to 183 (VPVG…ALLV), and 192 to 212 (GASL…GLYL). The CN hydrolase domain maps to 230-470 (IQGNIAQELK…QGILRGEVIP (241 aa)). The active-site Proton acceptor is the Glu-269. The active site involves Lys-330. The Nucleophile role is filled by Cys-382. A helical transmembrane segment spans residues 478–498 (LQYRVWPLAGLAGVLLLWALL).

This sequence belongs to the CN hydrolase family. Apolipoprotein N-acyltransferase subfamily.

It is found in the cell inner membrane. The catalysed reaction is N-terminal S-1,2-diacyl-sn-glyceryl-L-cysteinyl-[lipoprotein] + a glycerophospholipid = N-acyl-S-1,2-diacyl-sn-glyceryl-L-cysteinyl-[lipoprotein] + a 2-acyl-sn-glycero-3-phospholipid + H(+). Its pathway is protein modification; lipoprotein biosynthesis (N-acyl transfer). Functionally, catalyzes the phospholipid dependent N-acylation of the N-terminal cysteine of apolipoprotein, the last step in lipoprotein maturation. The chain is Apolipoprotein N-acyltransferase from Pseudomonas paraeruginosa (strain DSM 24068 / PA7) (Pseudomonas aeruginosa (strain PA7)).